The following is a 1585-amino-acid chain: Adhesion G protein-coupled receptor B2 (1585 aa).

A signal peptide spans 1-32 (MENTGWMGKGHRMTPACPLLLSVILSLRLATA). The Extracellular segment spans residues 33 to 936 (FDPAPSACSA…ELAGSPSVPL (904 aa)). N-linked (GlcNAc...) asparagine glycans are attached at residues Asn106, Asn191, and Asn192. Low complexity predominate over residues 229 to 238 (AGAGSTTTTS). The interval 229 to 271 (AGAGSTTTTSPGPPAAHTLSNALVPGGPAPPAEADLHSGSSND) is disordered. An O-linked (Xyl...) (chondroitin sulfate) serine glycan is attached at Ser266. TSP type-1 domains are found at residues 309 to 362 (DPAA…ATCP), 364 to 417 (HGVW…AACP), 419 to 472 (EGQW…LECP), and 475 to 528 (DSKW…KRCP). 14 disulfide bridges follow: Cys321-Cys355, Cys325-Cys361, Cys336-Cys345, Cys376-Cys411, Cys380-Cys416, Cys391-Cys401, Cys431-Cys466, Cys435-Cys471, Cys446-Cys456, Cys487-Cys522, Cys491-Cys527, Cys502-Cys512, Cys534-Cys569, and Cys557-Cys587. An N-linked (GlcNAc...) asparagine glycan is attached at Asn356. A glycan (N-linked (GlcNAc...) asparagine) is linked at Asn437. Asn560 and Asn645 each carry an N-linked (GlcNAc...) asparagine glycan. Positions 757 to 924 (DRLFLPKEVL…AVLAQPPKDL (168 aa)) constitute a GAIN-B domain. A disordered region spans residues 767–806 (SLSSPGKPATSGAAGSPGRGRGPGTVPPGPGHSHQRLLPA). Residues 769-780 (SSPGKPATSGAA) show a composition bias toward low complexity. Asn867 carries N-linked (GlcNAc...) asparagine glycosylation. Intrachain disulfides connect Cys874–Cys906 and Cys894–Cys908. A GPS region spans residues 874–924 (CASWDYSRADASSGDWDTENCQTLETQAAHTRCQCQHLSTFAVLAQPPKDL). A helical transmembrane segment spans residues 937-957 (VIGCAVSCMALLTLLAIYAAF). The Cytoplasmic segment spans residues 958-965 (WRFIKSER). The helical transmembrane segment at 966–986 (SIILLNFCLSILASNILILVG) threads the bilayer. The Extracellular portion of the chain corresponds to 987–994 (QSRVLSKG). A helical transmembrane segment spans residues 995 to 1015 (VCTMTAAFLHFFFLSSFCWVL). The Cytoplasmic portion of the chain corresponds to 1016-1036 (TEAWQSYLAVIGRMRTRLVRK). A helical transmembrane segment spans residues 1037–1057 (RFLCLGWGLPALVVAVSVGFT). The Extracellular portion of the chain corresponds to 1058–1078 (RTKGYGTSSYCWLSLEGGLLY). A helical transmembrane segment spans residues 1079–1099 (AFVGPAAVIVLVNMLIGIIVF). At 1100–1121 (NKLMARDGISDKSKKQRAGSER) the chain is on the cytoplasmic side. The helical transmembrane segment at 1122-1142 (CPWASLLLPCSACGAVPSPLL) threads the bilayer. Topologically, residues 1143 to 1153 (SSASARNAMAS) are extracellular. The chain crosses the membrane as a helical span at residues 1154 to 1174 (LWSSCVVLPLLALTWMSAVLA). The Cytoplasmic portion of the chain corresponds to 1175–1585 (MTDRRSVLFQ…PPDGDFQTEV (411 aa)). The residue at position 1351 (Tyr1351) is a Phosphotyrosine. Disordered stretches follow at residues 1359 to 1385 (LSLQ…PRRA), 1423 to 1454 (FQPP…GSTM), and 1498 to 1585 (YRSQ…QTEV). The span at 1372–1382 (DAPRARPEGTP) shows a compositional bias: basic and acidic residues. Positions 1543-1552 (SWSTFKSMTL) are enriched in polar residues. The segment covering 1575–1585 (EPPDGDFQTEV) has biased composition (acidic residues).

Belongs to the G-protein coupled receptor 2 family. Adhesion G-protein coupled receptor (ADGR) subfamily. As to quaternary structure, heterodimer of 2 chains generated by proteolytic processing; the large extracellular N-terminal fragment and the membrane-bound C-terminal fragment predominantly remain associated and non-covalently linked. Interacts with GABPB2. Interacts (via carboxy-terminus) with TAX1BP3. Interacts with GNAZ. Interacts with SH3GL2. Post-translationally, glycosylated. Autoproteolytically processed at the GPS region of the GAIN-B domain; this cleavage modulates receptor activity. Additionally, furin is involved in the cleavage at another site, in the middle of the extracellular domain, generating a soluble fragment. In terms of tissue distribution, detected in cerebrospinal fluid (at protein level). Strongly expressed in brain. Also detected in heart, thymus, skeletal muscle, and different cell lines.

It is found in the cell membrane. The protein resides in the secreted. Receptor activity is regulated by proteolytic processing. The long N-terminal has a an inhibitory effect on the constitutive signaling activity. Removal of the N-terminal region induces an increase of the receptor activity. In terms of biological role, orphan G-protein coupled receptor involved in cell adhesion and probably in cell-cell interactions. Activates NFAT-signaling pathway, a transcription factor, via the G-protein GNAZ. Involved in angiogenesis inhibition. This chain is Adhesion G protein-coupled receptor B2, found in Homo sapiens (Human).